Here is a 234-residue protein sequence, read N- to C-terminus: Adenosine 5'-phosphosulfate reductase (234 aa).

Residues cysteine 120, cysteine 121, cysteine 203, and cysteine 206 each contribute to the [4Fe-4S] cluster site. Residue cysteine 229 is the Nucleophile; cysteine thiosulfonate intermediate of the active site.

It belongs to the PAPS reductase family. CysH subfamily. It depends on [4Fe-4S] cluster as a cofactor.

It is found in the cytoplasm. The enzyme catalyses [thioredoxin]-disulfide + sulfite + AMP + 2 H(+) = adenosine 5'-phosphosulfate + [thioredoxin]-dithiol. It functions in the pathway sulfur metabolism; hydrogen sulfide biosynthesis; sulfite from sulfate. Catalyzes the formation of sulfite from adenosine 5'-phosphosulfate (APS) using thioredoxin as an electron donor. This is Adenosine 5'-phosphosulfate reductase from Bacillus cereus (strain AH820).